Consider the following 65-residue polypeptide: Large ribosomal subunit protein uL29 (65 aa).

It belongs to the universal ribosomal protein uL29 family.

The polypeptide is Large ribosomal subunit protein uL29 (Buchnera aphidicola subsp. Cinara cedri (strain Cc)).